An 83-amino-acid polypeptide reads, in one-letter code: NADH dehydrogenase [ubiquinone] iron-sulfur protein 5-B (83 aa).

Residues 11-52 (KGRCYDFWMDFSECMSHCREPKDCTLLREDYLECLHHSKEFQ) form the CHCH domain. 2 short sequence motifs (cx9C motif) span residues 14-24 (CYDFWMDFSEC) and 34-44 (CTLLREDYLEC). Disulfide bonds link Cys-14/Cys-44 and Cys-24/Cys-34. A disordered region spans residues 62-83 (QRKLRAASRKGEETGDGTHTHH).

Belongs to the complex I NDUFS5 subunit family. As to quaternary structure, complex I is composed of at least 49 different subunits. This is a component of the iron-sulfur (IP) fragment of the enzyme.

Its subcellular location is the mitochondrion. The protein localises to the mitochondrion inner membrane. The protein resides in the mitochondrion intermembrane space. Accessory subunit of the mitochondrial membrane respiratory chain NADH dehydrogenase (Complex I), that is believed not to be involved in catalysis. Complex I functions in the transfer of electrons from NADH to the respiratory chain. The immediate electron acceptor for the enzyme is believed to be ubiquinone. The protein is NADH dehydrogenase [ubiquinone] iron-sulfur protein 5-B of Arabidopsis thaliana (Mouse-ear cress).